The sequence spans 333 residues: tRNA N6-adenosine threonylcarbamoyltransferase (333 aa).

2 residues coordinate Fe cation: H111 and H115. Substrate is bound by residues 134 to 138, D167, G180, and N272; that span reads LVSGG. Residue D300 coordinates Fe cation.

The protein belongs to the KAE1 / TsaD family. Fe(2+) is required as a cofactor.

Its subcellular location is the cytoplasm. The enzyme catalyses L-threonylcarbamoyladenylate + adenosine(37) in tRNA = N(6)-L-threonylcarbamoyladenosine(37) in tRNA + AMP + H(+). In terms of biological role, required for the formation of a threonylcarbamoyl group on adenosine at position 37 (t(6)A37) in tRNAs that read codons beginning with adenine. Is involved in the transfer of the threonylcarbamoyl moiety of threonylcarbamoyl-AMP (TC-AMP) to the N6 group of A37, together with TsaE and TsaB. TsaD likely plays a direct catalytic role in this reaction. The chain is tRNA N6-adenosine threonylcarbamoyltransferase from Hamiltonella defensa subsp. Acyrthosiphon pisum (strain 5AT).